A 212-amino-acid chain; its full sequence is Protein-L-isoaspartate O-methyltransferase (212 aa).

Residue Ser60 is part of the active site.

The protein belongs to the methyltransferase superfamily. L-isoaspartyl/D-aspartyl protein methyltransferase family.

The protein localises to the cytoplasm. It catalyses the reaction [protein]-L-isoaspartate + S-adenosyl-L-methionine = [protein]-L-isoaspartate alpha-methyl ester + S-adenosyl-L-homocysteine. Its function is as follows. Catalyzes the methyl esterification of L-isoaspartyl residues in peptides and proteins that result from spontaneous decomposition of normal L-aspartyl and L-asparaginyl residues. It plays a role in the repair and/or degradation of damaged proteins. This Methanococcus maripaludis (strain C6 / ATCC BAA-1332) protein is Protein-L-isoaspartate O-methyltransferase.